Here is a 747-residue protein sequence, read N- to C-terminus: ATPase family gene 2 protein homolog B (747 aa).

Position 1 is an N-acetylmethionine (Met1). Residues Gly234–Thr241 and Gly500–Thr507 contribute to the ATP site.

This sequence belongs to the AAA ATPase family. AFG2 subfamily. As to quaternary structure, part of the 55LCC heterohexameric ATPase complex composed at least of AIRIM, AFG2A, AFG2B and CINP. Associates with pre-60S ribosomal particles. As to expression, in adult ear, expressed at low levels in neurosensory hair cells (inner and outer) and supporting cells (pillar and Deiter cells).

It is found in the cytoplasm. The protein localises to the cytoskeleton. Its subcellular location is the spindle. It localises to the nucleus. It carries out the reaction ATP + H2O = ADP + phosphate + H(+). In the context of 55LCC heterohexameric ATPase complex, the ATPase activity is stimulated by DNA binding and inhibited in presence of RNA. Its function is as follows. ATP-dependent chaperone part of the 55LCC heterohexameric ATPase complex which is chromatin-associated and promotes replisome proteostasis to maintain replication fork progression and genome stability. Required for replication fork progression, sister chromatid cohesion, and chromosome stability. The ATPase activity is specifically enhanced by replication fork DNA and is coupled to cysteine protease-dependent cleavage of replisome substrates in response to replication fork damage. Uses ATPase activity to process replisome substrates in S-phase, facilitating their proteolytic turnover from chromatin to ensure DNA replication and mitotic fidelity. Plays an essential role in the cytoplasmic maturation steps of pre-60S ribosomal particles by promoting the release of shuttling protein RSL24D1/RLP24 from the pre-ribosomal particles. This Mus musculus (Mouse) protein is ATPase family gene 2 protein homolog B (Afg2b).